Reading from the N-terminus, the 218-residue chain is Flagellin B1 (218 aa).

Residues 1-12 (MNIKEFLSNKKG) constitute a propeptide that is removed on maturation. Residues Asn38, Asn71, Asn77, Asn115, and Asn136 are each glycosylated (N-linked (GlcNAc...) asparagine).

It belongs to the archaeal flagellin family. In terms of processing, N-linked glycans consist of the 779 Da trisaccharide beta-ManNAc(Thr)-(1-4)-beta-GlcNAc3NAcA-(1-3)-beta-GlcNAc.

It is found in the archaeal flagellum. Functionally, flagellin is the subunit protein which polymerizes to form the filaments of archaeal flagella. The chain is Flagellin B1 (flaB1) from Methanococcus voltae.